The following is a 259-amino-acid chain: Borneol dehydrogenase, mitochondrial (259 aa).

The N-terminal 30 residues, 1–30 (MASTVLRRLEGKVALITGAASGIGESAARL), are a transit peptide targeting the mitochondrion. NAD(+) is bound by residues 21–23 (SGI), Asp-42, 63–64 (DV), and 90–92 (NAG). The Proton donor role is filled by Ser-144. Residues Ser-144 and Tyr-157 each coordinate substrate. NAD(+)-binding residues include Tyr-157, Lys-161, and Thr-192. Tyr-157 serves as the catalytic Proton acceptor. Lys-161 functions as the Proton donor/acceptor in the catalytic mechanism.

The protein belongs to the short-chain dehydrogenases/reductases (SDR) family. In terms of tissue distribution, specifically expressed in glandular trichomes of mature flowers.

The protein resides in the mitochondrion. The enzyme catalyses borneol + NAD(+) = camphor + NADH + H(+). It functions in the pathway secondary metabolite biosynthesis; terpenoid biosynthesis. Functionally, involved in the biosynthesis of monoterpenes natural products related to camphor. Catalyzes the conversion of borneol into camphor. The sequence is that of Borneol dehydrogenase, mitochondrial from Lavandula x intermedia (Lavandin).